Consider the following 56-residue polypeptide: Large ribosomal subunit protein bL33 (56 aa).

A compositionally biased stretch (basic and acidic residues) spans 1-12; the sequence is MASKGGRDKIKL. The tract at residues 1–30 is disordered; that stretch reads MASKGGRDKIKLESTAGTGHFYTTTKNKRT. The span at 15 to 25 shows a compositional bias: polar residues; it reads TAGTGHFYTTT.

This sequence belongs to the bacterial ribosomal protein bL33 family.

The sequence is that of Large ribosomal subunit protein bL33 from Ralstonia nicotianae (strain ATCC BAA-1114 / GMI1000) (Ralstonia solanacearum).